The chain runs to 598 residues: Serine/threonine-protein kinase PLK1 (598 aa).

Residues 1 to 23 (MAQVAGKKLTVAPEAAKPPGIPG) are disordered. Thr-10 is subject to Phosphothreonine; by PKA; in vitro. 2 positions are modified to phosphoserine: Ser-25 and Ser-26. In terms of domain architecture, Protein kinase spans 44 to 296 (YLRGRFLGKG…IDDLLNDEFF (253 aa)). Residues 50–58 (LGKGGFAKC), Lys-73, and Glu-122 each bind ATP. Catalysis depends on Asp-167, which acts as the Proton acceptor. Residues 169–172 (KLGN) and Asp-185 each bind ATP. The activation loop stretch occupies residues 185–212 (DFGLATKVEYDGERKKTLCGTPNYIAPE). Phosphothreonine; by PKA is present on Thr-201. Phosphoserine; by autocatalysis occurs at positions 260 and 326. The D-box that targets the protein for proteasomal degradation in anaphase motif lies at 328–331 (RKPL). Position 340 is a phosphoserine; by CDK1 (Ser-340). Residues 404–482 (WISKWVDYSD…LKYFRNYMSE (79 aa)) enclose the POLO box 1 domain. Positions 487-501 (AGANTTPREGDELAR) are linker. In terms of domain architecture, POLO box 2 spans 504–586 (FLRTWFRTRS…ARTMVEKLQS (83 aa)). The segment at 532–534 (HTK) is important for interaction with phosphorylated proteins.

Belongs to the protein kinase superfamily. Ser/Thr protein kinase family. In terms of assembly, interacts with plk1 and kif2a. Interacts with fbxo5. Post-translationally, activated by phosphorylation on Thr-201 during M phase. Phosphorylated by stk10, leading to activation during oocyte maturation. In terms of processing, ubiquitinated by the anaphase promoting complex/cyclosome (APC/C) in anaphase and following DNA damage, leading to its degradation by the proteasome. Protein levels are down-regulated by proteasomal degradation in anaphase.

The protein resides in the nucleus. It localises to the cytoplasm. The protein localises to the cytoskeleton. It is found in the microtubule organizing center. Its subcellular location is the centrosome. The protein resides in the spindle. It localises to the midbody. The enzyme catalyses L-seryl-[protein] + ATP = O-phospho-L-seryl-[protein] + ADP + H(+). It carries out the reaction L-threonyl-[protein] + ATP = O-phospho-L-threonyl-[protein] + ADP + H(+). With respect to regulation, activated by phosphorylation of Thr-201. In terms of biological role, serine/threonine-protein kinase that performs several important functions throughout M phase of the cell cycle, including the regulation of centrosome maturation and spindle assembly, the removal of cohesins from chromosome arms, the inactivation of anaphase-promoting complex/cyclosome (APC/C) inhibitors, and the regulation of mitotic exit and cytokinesis. Polo-like kinase proteins act by binding and phosphorylating proteins that are already phosphorylated on a specific motif recognized by the POLO box domains. Phosphorylates cdc25, pkmyt1/myt1, stag2/sa2, tpx2. Plays multiple essential roles during mitosis. Phosphorylates the N-terminal domain of cdc25, which leads to cyclin b-cdc2 activation and mitotic entry. Also required for organization of bipolar spindles, and for exit from mitosis. Involved in kinetochore functions and sister chromatid cohesion by phosphorylating stag2/sa2. In Xenopus laevis (African clawed frog), this protein is Serine/threonine-protein kinase PLK1 (plk1).